The chain runs to 109 residues: Spermidine export protein MdtI (109 aa).

Helical transmembrane passes span 6-26 (WVHA…NVFL), 36-56 (IFGL…SQAV), 64-84 (AYAL…WILF), and 88-108 (LNRK…MVKL).

It belongs to the drug/metabolite transporter (DMT) superfamily. Small multidrug resistance (SMR) (TC 2.A.7.1) family. MdtI subfamily. Forms a complex with MdtJ.

Its subcellular location is the cell inner membrane. Functionally, catalyzes the excretion of spermidine. In Shigella dysenteriae serotype 1 (strain Sd197), this protein is Spermidine export protein MdtI.